The following is a 200-amino-acid chain: Small heat shock protein hspG2 (200 aa).

Residues 33–200 form the sHSP domain; it reads NKRIDIIPSM…DNFQIKLKSI (168 aa). The disordered stretch occupies residues 86–139; sequence KLQQQQQQQSEKSSQSTNNKDDDEPSIEEYEDDTKLKSNLNKNTENKDENKTTS. Over residues 88-101 the composition is skewed to low complexity; it reads QQQQQQQSEKSSQS. Residues 106-117 show a composition bias toward acidic residues; it reads DDDEPSIEEYED.

It belongs to the small heat shock protein (HSP20) family.

The sequence is that of Small heat shock protein hspG2 (hspG2) from Dictyostelium discoideum (Social amoeba).